The sequence spans 683 residues: Protein hook (683 aa).

The 119-residue stretch at Asn5 to Ala123 folds into the Calponin-homology (CH) domain. Coiled coils occupy residues Glu135–Gly440 and Gln484–Val594.

This sequence belongs to the hook family. Homodimer. Interacts with microtubules via its N-terminus.

The protein resides in the cytoplasm. It is found in the cytoskeleton. The protein localises to the endosome. Its subcellular location is the synapse. Involved in endocytic trafficking by stabilizing organelles of the endocytic pathway. Probably acts as a cytoskeletal linker protein required to tether endosome vesicles to the cytoskeleton. Involved in modulation of endocytosis at stages required for down-regulation of membrane proteins that control synapse size. Not involved in synaptic vesicle recycling. Required in R7 cells for boss endocytosis into multivesicular bodies (MVBs). Has a role in regulating adult longevity. This chain is Protein hook, found in Drosophila grimshawi (Hawaiian fruit fly).